We begin with the raw amino-acid sequence, 630 residues long: Subtilisin-like protease 1 (630 aa).

A signal peptide spans 1 to 25; sequence MVLTRRAALLLCPWVIQLVIKRTLA. The propeptide at 26–202 is inhibition peptide; it reads GDILPNEGKK…IESDKLVGAD (177 aa). Residues 72 to 125 form a disordered region; it reads NAYNPDRDAPKEELQKLQDQQETPSKQPNNLRNSPQKRAEKKESPGKNKKSLRL. Basic and acidic residues predominate over residues 76 to 87; the sequence is PDRDAPKEELQK. A compositionally biased stretch (polar residues) spans 94-107; that stretch reads TPSKQPNNLRNSPQ. Residues 108 to 117 show a composition bias toward basic and acidic residues; that stretch reads KRAEKKESPG. Positions 129, 130, 133, 135, and 190 each coordinate Ca(2+). Residues 230-254 are disordered; the sequence is LEVPSGESPPSHAASSGSPFDDDDD. Residues 233 to 248 are compositionally biased toward low complexity; the sequence is PSGESPPSHAASSGSP. Residue aspartate 281 coordinates Ca(2+). The Peptidase S8 domain occupies 287–604; it reads QWGLDLARLD…GGYVDILRAV (318 aa). Disulfide bonds link cysteine 313/cysteine 423, cysteine 402/cysteine 419, and cysteine 465/cysteine 478. Aspartate 316 serves as the catalytic Charge relay system. 11 residues coordinate Ca(2+): aspartate 325, glutamate 336, arginine 340, valine 343, aspartate 344, aspartate 345, aspartate 346, asparagine 348, valine 350, aspartate 352, and aspartate 353. The active-site Charge relay system is the histidine 372. Ca(2+) is bound by residues valine 383, asparagine 386, isoleucine 388, and isoleucine 390. Asparagine 546 is a glycosylation site (N-linked (GlcNAc...) asparagine). Residue serine 549 is the Charge relay system of the active site.

The protein belongs to the peptidase S8 family. In terms of assembly, heterodimer between p54 form and prodomain p31; the interaction inhibits p54 catalytic activity. Heterodimer p31-p54 is monomeric at basic pH and dimeric at acidic pH; dimerization is driven by the N-terminal prodomain (p31). The cofactor is Ca(2+). In terms of processing, the prodomain (p31) is cleaved, probably by autocatalysis, and remains non-covalently associated with the p54 form as an inhibitor. p54 is further cleaved into the p45/p47 forms. Post-translationally, the relevance of the N-glycosylation is not clear. In an insect expression system, SUB1 glycosylation appears to affect its processing into the active mature form suggesting that SUB1 may not be N-glycosylated in parasites.

The protein resides in the secreted. It is found in the parasitophorous vacuole lumen. The enzyme catalyses Hydrolysis of proteins with broad specificity for peptide bonds, and a preference for a large uncharged residue in P1. Hydrolyzes peptide amides.. With respect to regulation, inhibited by peptidic alpha-ketoamide inhibitors. Inhibited by the alpha-ketoamide nonapeptide JMV5126 (isocaproyl-KITAQ(CO)DDEE-NH2). Inhibited by the alpha-ketoamide peptide MAM-117. Serine protease which plays an essential role in merozoite invasion of and egress from host erythrocytes by processing and activating various merozoite surface and parasitophorous vacuole proteins. This chain is Subtilisin-like protease 1, found in Plasmodium vivax.